We begin with the raw amino-acid sequence, 849 residues long: Glycogen phosphorylase (849 aa).

At K679 the chain carries N6-(pyridoxal phosphate)lysine.

Belongs to the glycogen phosphorylase family. Requires pyridoxal 5'-phosphate as cofactor.

The enzyme catalyses [(1-&gt;4)-alpha-D-glucosyl](n) + phosphate = [(1-&gt;4)-alpha-D-glucosyl](n-1) + alpha-D-glucose 1-phosphate. Its function is as follows. Phosphorylase is an important allosteric enzyme in carbohydrate metabolism. Enzymes from different sources differ in their regulatory mechanisms and in their natural substrates. However, all known phosphorylases share catalytic and structural properties. The polypeptide is Glycogen phosphorylase (glgP) (Synechocystis sp. (strain ATCC 27184 / PCC 6803 / Kazusa)).